Consider the following 199-residue polypeptide: Patulin biosynthesis cluster protein F (199 aa).

Residues 1–21 (MKSSLWVSLAVSLIGLGPAAA) form the signal peptide. 2 N-linked (GlcNAc...) asparagine glycosylation sites follow: Asn129 and Asn183.

It belongs to the patF family.

The protein localises to the cytoplasm. It localises to the cytosol. The enzyme catalyses phyllostine = neopatulin. It participates in mycotoxin biosynthesis; patulin biosynthesis. In terms of biological role, part of the gene cluster that mediates the biosynthesis of patulin, an acetate-derived tetraketide mycotoxin produced by several fungal species that shows antimicrobial properties against several bacteria. PatF catalyzes the conversion of phyllostine into neopatulin. The pathway begins with the synthesis of 6-methylsalicylic acid by the polyketide synthase (PKS) patK via condensation of acetate and malonate units. The 6-methylsalicylic acid decarboxylase patG then catalyzes the decarboxylation of 6-methylsalicylic acid to yield m-cresol (also known as 3-methylphenol). These first reactions occur in the cytosol. The intermediate m-cresol is then transported into the endoplasmic reticulum where the cytochrome P450 monooxygenase patH converts it to m-hydroxybenzyl alcohol, which is further converted to gentisyl alcohol by the cytochrome P450 monooxygenase patI. The oxidoreductases patJ and patO further convert gentisyl alcohol to isoepoxydon in the vacuole. PatN catalyzes then the transformation of isoepoxydon into phyllostine. The cluster protein patF is responsible for the conversion from phyllostine to neopatulin whereas the alcohol dehydrogenase patD converts neopatulin to E-ascladiol. The steps between isoepoxydon and E-ascladiol occur in the cytosol, and E-ascladiol is probably secreted to the extracellular space by one of the cluster-specific transporters patC or patM. Finally, the secreted patulin synthase patE catalyzes the conversion of E-ascladiol to patulin. This Penicillium expansum (Blue mold rot fungus) protein is Patulin biosynthesis cluster protein F.